A 400-amino-acid chain; its full sequence is Na(+)/H(+) antiporter NhaA 1 (400 aa).

The next 11 membrane-spanning stretches (helical) occupy residues 25 to 45 (IVLM…FSSM), 67 to 87 (ILHW…GMEI), 103 to 123 (ILPV…YALF), 130 to 150 (IIGW…ILSL), 159 to 179 (IIIF…IVIA), 184 to 204 (SEIS…IILA), 213 to 233 (WLYI…GVHE), 264 to 284 (VLTP…NSGI), 303 to 323 (IIFG…YILV), 339 to 359 (LYGA…VSSL), and 372 to 392 (ISII…FKII).

The protein belongs to the NhaA Na(+)/H(+) (TC 2.A.33) antiporter family.

It localises to the cell membrane. It carries out the reaction Na(+)(in) + 2 H(+)(out) = Na(+)(out) + 2 H(+)(in). In terms of biological role, na(+)/H(+) antiporter that extrudes sodium in exchange for external protons. In Clostridium beijerinckii (strain ATCC 51743 / NCIMB 8052) (Clostridium acetobutylicum), this protein is Na(+)/H(+) antiporter NhaA 1.